The following is a 210-amino-acid chain: Ribosomal RNA large subunit methyltransferase E (210 aa).

Positions 60, 62, 80, 96, and 121 each coordinate S-adenosyl-L-methionine. K161 serves as the catalytic Proton acceptor.

Belongs to the class I-like SAM-binding methyltransferase superfamily. RNA methyltransferase RlmE family.

The protein localises to the cytoplasm. The enzyme catalyses uridine(2552) in 23S rRNA + S-adenosyl-L-methionine = 2'-O-methyluridine(2552) in 23S rRNA + S-adenosyl-L-homocysteine + H(+). Functionally, specifically methylates the uridine in position 2552 of 23S rRNA at the 2'-O position of the ribose in the fully assembled 50S ribosomal subunit. The polypeptide is Ribosomal RNA large subunit methyltransferase E (Vesicomyosocius okutanii subsp. Calyptogena okutanii (strain HA)).